The sequence spans 497 residues: 4,4'-diaponeurosporene oxygenase (497 aa).

7 to 19 (VIGGGLGGISAAI) contributes to the FAD binding site.

It belongs to the carotenoid/retinoid oxidoreductase family. CrtP subfamily. Requires FAD as cofactor.

The enzyme catalyses all-trans-4,4'-diaponeurosporene + 2 AH2 + 2 O2 = 4,4'-diaponeurosporenal + 2 A + 3 H2O. It functions in the pathway carotenoid biosynthesis; staphyloxanthin biosynthesis; staphyloxanthin from farnesyl diphosphate: step 3/5. Functionally, involved in the biosynthesis of the yellow-orange carotenoid staphyloxanthin, which plays a role in the virulence via its protective function against oxidative stress. Catalyzes the oxidation of the terminal methyl side group of 4,4'-diaponeurosporene to form 4,4'-diaponeurosporen-4-al. This Staphylococcus aureus (strain MSSA476) protein is 4,4'-diaponeurosporene oxygenase.